A 190-amino-acid chain; its full sequence is Protein A52 (190 aa).

This sequence belongs to the orthopoxvirus A52R protein family. In terms of assembly, interacts with host TRAF6 and IRAK2.

In terms of biological role, bcl-2-like protein which targets host toll-like receptor signaling complexes to suppress innate immune response. Interacts with host TRAF6 to activate p38 and subsequently induce the expression of several cytokines such as IL-10. Also associates with host IRAK2 to inhibit NF-kappa-B signaling. The chain is Protein A52 from Vaccinia virus (strain Western Reserve) (VACV).